The following is a 521-amino-acid chain: Bifunctional purine biosynthesis protein PurH (521 aa).

Residues 1–145 (MIKQALISVS…KNHRDVTVVV (145 aa)) form the MGS-like domain.

It belongs to the PurH family.

It catalyses the reaction (6R)-10-formyltetrahydrofolate + 5-amino-1-(5-phospho-beta-D-ribosyl)imidazole-4-carboxamide = 5-formamido-1-(5-phospho-D-ribosyl)imidazole-4-carboxamide + (6S)-5,6,7,8-tetrahydrofolate. The catalysed reaction is IMP + H2O = 5-formamido-1-(5-phospho-D-ribosyl)imidazole-4-carboxamide. It functions in the pathway purine metabolism; IMP biosynthesis via de novo pathway; 5-formamido-1-(5-phospho-D-ribosyl)imidazole-4-carboxamide from 5-amino-1-(5-phospho-D-ribosyl)imidazole-4-carboxamide (10-formyl THF route): step 1/1. Its pathway is purine metabolism; IMP biosynthesis via de novo pathway; IMP from 5-formamido-1-(5-phospho-D-ribosyl)imidazole-4-carboxamide: step 1/1. The sequence is that of Bifunctional purine biosynthesis protein PurH from Burkholderia pseudomallei (strain 1710b).